The following is a 342-amino-acid chain: Nucleoid-associated protein Sfri_2491 (342 aa).

Belongs to the YejK family.

The protein localises to the cytoplasm. Its subcellular location is the nucleoid. This chain is Nucleoid-associated protein Sfri_2491, found in Shewanella frigidimarina (strain NCIMB 400).